We begin with the raw amino-acid sequence, 491 residues long: 3-octaprenyl-4-hydroxybenzoate carboxy-lyase (491 aa).

Residue asparagine 172 participates in Mn(2+) binding. Residues 175–177 (IYR), 189–191 (RWL), and 194–195 (RG) each bind prenylated FMN. Residue glutamate 238 coordinates Mn(2+). Catalysis depends on aspartate 287, which acts as the Proton donor.

Belongs to the UbiD family. As to quaternary structure, homohexamer. Prenylated FMN is required as a cofactor. Requires Mn(2+) as cofactor.

Its subcellular location is the cell membrane. The catalysed reaction is a 4-hydroxy-3-(all-trans-polyprenyl)benzoate + H(+) = a 2-(all-trans-polyprenyl)phenol + CO2. The protein operates within cofactor biosynthesis; ubiquinone biosynthesis. Functionally, catalyzes the decarboxylation of 3-octaprenyl-4-hydroxy benzoate to 2-octaprenylphenol, an intermediate step in ubiquinone biosynthesis. This Alcanivorax borkumensis (strain ATCC 700651 / DSM 11573 / NCIMB 13689 / SK2) protein is 3-octaprenyl-4-hydroxybenzoate carboxy-lyase.